The sequence spans 687 residues: Glycine--tRNA ligase beta subunit (687 aa).

It belongs to the class-II aminoacyl-tRNA synthetase family. Tetramer of two alpha and two beta subunits.

It localises to the cytoplasm. It catalyses the reaction tRNA(Gly) + glycine + ATP = glycyl-tRNA(Gly) + AMP + diphosphate. The polypeptide is Glycine--tRNA ligase beta subunit (Citrifermentans bemidjiense (strain ATCC BAA-1014 / DSM 16622 / JCM 12645 / Bem) (Geobacter bemidjiensis)).